The sequence spans 485 residues: MTKAIRVRYAPSPTGLLHIGNARTALFNYLYARHYGGTFIIRIEDTDRKRHVEDGERSQLENLRWLGIDWDESPETHENYRQSERLDMYQKYVNELLDKGLAYKSYVTEEELAAERERQEAAGETPRYINEYLGMSEEEKAAYIAEREAAGIIPTVRLAVNETGVYKWTDIVKGEIEFEGGNIGGDWVIQKKDGYPTYNFAVVIDDHLMEISHVIRGDDHIANTPKQLMVYEALGWEAPEFGHMTLIINSETGKKLSKRDTNTLQFIEDYRKKGYLPEAVFNFIALLGWNPGGEHEIFSRQELIELFDEKRLSKSPAAFDQKKLDWMNNEYIKNADFDTIFALAKPYLEEAGRLTDKAEKLVELYKPQMKSVDEIVPLTDLFFADFPELTDAEREVMAGETVPTVLTAFKEKLEAMSDADFVTENIFPQIKAVQKETGIKGKNLFMPIRIAVSGEMHGPELPDTIYLLGREKSIQHIENMLNQIQ.

The short motif at 11–21 (PSPTGLLHIGN) is the 'HIGH' region element. The 'KMSKS' region motif lies at 255-259 (KLSKR). K258 contributes to the ATP binding site.

Belongs to the class-I aminoacyl-tRNA synthetase family. Glutamate--tRNA ligase type 1 subfamily. Monomer.

Its subcellular location is the cytoplasm. The catalysed reaction is tRNA(Glu) + L-glutamate + ATP = L-glutamyl-tRNA(Glu) + AMP + diphosphate. Catalyzes the attachment of glutamate to tRNA(Glu) in a two-step reaction: glutamate is first activated by ATP to form Glu-AMP and then transferred to the acceptor end of tRNA(Glu). This Streptococcus sanguinis (strain SK36) protein is Glutamate--tRNA ligase.